Consider the following 147-residue polypeptide: MVNFTAEEKTLINGLWSKVNVEEVGGEALGRLLVVYPWTQRFFDSFGNLSSASAIMGNPRVKAHGKKVLTAFGESIKNLDNLKSALAKLSELHCDKLHVDPENFKLLGNVLVIVLASHFGNEFTAEMQAAWQKLVAGVATALSHKYH.

The 145-residue stretch at 3-147 (NFTAEEKTLI…VATALSHKYH (145 aa)) folds into the Globin domain. S51 carries the phosphoserine modification. H64 and H93 together coordinate heme b.

This sequence belongs to the globin family. As to expression, high expression in yolk sac blood islands, fetal liver, and embryonic erythrocytes. Very low levels in adult liver and spleen.

Hemoglobin epsilon chain is a beta-type chain found in early embryos. In Mus musculus (Mouse), this protein is Hemoglobin subunit epsilon-Y2 (Hbb-y).